We begin with the raw amino-acid sequence, 320 residues long: Phosphate acetyltransferase (320 aa).

Belongs to the phosphate acetyltransferase and butyryltransferase family.

The protein resides in the cytoplasm. The catalysed reaction is acetyl-CoA + phosphate = acetyl phosphate + CoA. Its pathway is metabolic intermediate biosynthesis; acetyl-CoA biosynthesis; acetyl-CoA from acetate: step 2/2. The chain is Phosphate acetyltransferase (pta) from Mycoplasma genitalium (strain ATCC 33530 / DSM 19775 / NCTC 10195 / G37) (Mycoplasmoides genitalium).